A 128-amino-acid polypeptide reads, in one-letter code: MNVIVNTENAPKPIGPYSQAIKNENFLIISGQIPIDVKSGKIPNNISEQTYIVLKNIKSIIIASKYTIQDIIKITVFTTNLEKIHIINEIYEKFFIDNKSSFPTRSCIEVQKLPKNVKIEMEAMAFKK.

Belongs to the RutC family.

The polypeptide is RutC family protein BUsg_359 (Buchnera aphidicola subsp. Schizaphis graminum (strain Sg)).